Consider the following 274-residue polypeptide: Thiazole synthase (274 aa).

The active-site Schiff-base intermediate with DXP is Lys115. 1-deoxy-D-xylulose 5-phosphate-binding positions include Gly176, 202–203 (AG), and 224–225 (NS).

It belongs to the ThiG family. In terms of assembly, homotetramer. Forms heterodimers with either ThiH or ThiS.

The protein localises to the cytoplasm. It catalyses the reaction [ThiS sulfur-carrier protein]-C-terminal-Gly-aminoethanethioate + 2-iminoacetate + 1-deoxy-D-xylulose 5-phosphate = [ThiS sulfur-carrier protein]-C-terminal Gly-Gly + 2-[(2R,5Z)-2-carboxy-4-methylthiazol-5(2H)-ylidene]ethyl phosphate + 2 H2O + H(+). It functions in the pathway cofactor biosynthesis; thiamine diphosphate biosynthesis. In terms of biological role, catalyzes the rearrangement of 1-deoxy-D-xylulose 5-phosphate (DXP) to produce the thiazole phosphate moiety of thiamine. Sulfur is provided by the thiocarboxylate moiety of the carrier protein ThiS. In vitro, sulfur can be provided by H(2)S. The protein is Thiazole synthase of Parasynechococcus marenigrum (strain WH8102).